The following is a 348-amino-acid chain: NADH-ubiquinone oxidoreductase chain 2 (348 aa).

The next 11 helical transmembrane spans lie at 3–23, 25–45, 60–80, 99–119, 122–142, 150–170, 178–196, 200–219, 246–266, 274–294, and 328–348; these read PYVL…TFAS, HWLL…RLMA, FLTQ…NAWA, MMAL…PEVL, LDLT…FALI, NPML…WGGL, ILAY…ILQY, LTLI…FLSL, LTLL…KWLI, DLPA…YFYL, and LMMI…ALFF.

Belongs to the complex I subunit 2 family.

The protein localises to the mitochondrion inner membrane. The catalysed reaction is a ubiquinone + NADH + 5 H(+)(in) = a ubiquinol + NAD(+) + 4 H(+)(out). Functionally, core subunit of the mitochondrial membrane respiratory chain NADH dehydrogenase (Complex I) that is believed to belong to the minimal assembly required for catalysis. Complex I functions in the transfer of electrons from NADH to the respiratory chain. The immediate electron acceptor for the enzyme is believed to be ubiquinone. This is NADH-ubiquinone oxidoreductase chain 2 (MT-ND2) from Formosania lacustris (Oriental stream loach).